A 185-amino-acid chain; its full sequence is Elongation factor P (185 aa).

The protein belongs to the elongation factor P family.

The protein resides in the cytoplasm. It participates in protein biosynthesis; polypeptide chain elongation. Functionally, involved in peptide bond synthesis. Stimulates efficient translation and peptide-bond synthesis on native or reconstituted 70S ribosomes in vitro. Probably functions indirectly by altering the affinity of the ribosome for aminoacyl-tRNA, thus increasing their reactivity as acceptors for peptidyl transferase. This chain is Elongation factor P, found in Clostridium botulinum (strain Alaska E43 / Type E3).